We begin with the raw amino-acid sequence, 333 residues long: Eukaryotic translation initiation factor 2 subunit 2 (333 aa).

Disordered regions lie at residues 1-119 and 139-164; these read MSGD…DLDI and ILEK…NQTG. Position 2 is an N-acetylserine (S2). 2 positions are modified to phosphoserine: S2 and S13. A compositionally biased stretch (basic residues) spans 13-22; sequence SKKKKKKKKP. Phosphothreonine is present on residues T31 and T36. Residues 40–51 show a composition bias toward basic and acidic residues; sequence ETKEVEPEPTED. S67 is subject to Phosphoserine. A compositionally biased stretch (basic and acidic residues) spans 96–105; sequence EGVKDLKIES. K102 participates in a covalent cross-link: Glycyl lysine isopeptide (Lys-Gly) (interchain with G-Cter in SUMO2). Position 105 is a phosphoserine (S105). Acidic residues-rich tracts occupy residues 106-118 and 139-149; these read DVQE…DDLD and ILEKDEALEDE. T111 is modified (phosphothreonine). Residues S158 and S218 each carry the phosphoserine modification. An N6-acetyllysine mark is found at K265 and K293. A C4-type zinc finger spans residues 281–305; that stretch reads CHTCRSPDTILQKDTRLYFLQCETC.

It belongs to the eIF-2-beta/eIF-5 family. Eukaryotic translation initiation factor 2 eIF2 is a heterotrimeric complex composed of an alpha (EIF2S1), a beta (EIF2S2) and a gamma (EIF2S3) chain. eIF2 is member of the 43S pre-initiation complex (43S PIC). eIF2 forms a complex with at least CELF1/CUGBP1, CALR, CALR3, EIF2S1, EIF2S2, HSP90B1 and HSPA5. Interacts with BZW2/5MP1. Interacts with EIF5.

It is found in the cytoplasm. It localises to the cytosol. Its function is as follows. Component of the eIF2 complex that functions in the early steps of protein synthesis by forming a ternary complex with GTP and initiator tRNA. This complex binds to a 40S ribosomal subunit, followed by mRNA binding to form the 43S pre-initiation complex (43S PIC). Junction of the 60S ribosomal subunit to form the 80S initiation complex is preceded by hydrolysis of the GTP bound to eIF2 and release of an eIF2-GDP binary complex. In order for eIF2 to recycle and catalyze another round of initiation, the GDP bound to eIF2 must exchange with GTP by way of a reaction catalyzed by eIF2B. This is Eukaryotic translation initiation factor 2 subunit 2 (EIF2S2) from Pongo abelii (Sumatran orangutan).